We begin with the raw amino-acid sequence, 730 residues long: Trimethylamine dehydrogenase (730 aa).

Residues P29, C31, Y61, and E104 each coordinate FMN. C31 is modified (S-6-FMN cysteine). 170 to 173 (YGAH) is a substrate binding site. The active-site Proton donor is the Y175. FMN is bound by residues R223, D268, R300, A322, and R323. C346, C349, C352, and C365 together coordinate [4Fe-4S] cluster. ADP-binding residues include S401, D420, T421, H428, M471, and D675.

This sequence in the N-terminal section; belongs to the NADH:flavin oxidoreductase/NADH oxidase family. In terms of assembly, homodimer. Forms a ternary complex with the heterodimeric electron transfer flavoprotein. FMN serves as cofactor. The cofactor is [4Fe-4S] cluster.

The catalysed reaction is trimethylamine + oxidized [electron-transfer flavoprotein] + H2O + H(+) = dimethylamine + reduced [electron-transfer flavoprotein] + formaldehyde. The polypeptide is Trimethylamine dehydrogenase (Methylophilus methylotrophus (Bacterium W3A1)).